A 457-amino-acid chain; its full sequence is Siroheme synthase (457 aa).

The tract at residues 1 to 204 (MDHLPIFCQL…NDQKAITETT (204 aa)) is precorrin-2 dehydrogenase /sirohydrochlorin ferrochelatase. NAD(+) is bound by residues 22 to 23 (DV) and 43 to 44 (LA). A Phosphoserine modification is found at Ser128. Positions 216–457 (GEVVLVGAGP…RDKLNWFSNH (242 aa)) are uroporphyrinogen-III C-methyltransferase. Pro225 provides a ligand contact to S-adenosyl-L-methionine. Asp248 acts as the Proton acceptor in catalysis. Lys270 serves as the catalytic Proton donor. S-adenosyl-L-methionine is bound by residues 301 to 303 (GGD), Ile306, 331 to 332 (TA), Met382, and Gly411.

The protein in the N-terminal section; belongs to the precorrin-2 dehydrogenase / sirohydrochlorin ferrochelatase family. This sequence in the C-terminal section; belongs to the precorrin methyltransferase family.

The enzyme catalyses uroporphyrinogen III + 2 S-adenosyl-L-methionine = precorrin-2 + 2 S-adenosyl-L-homocysteine + H(+). It carries out the reaction precorrin-2 + NAD(+) = sirohydrochlorin + NADH + 2 H(+). It catalyses the reaction siroheme + 2 H(+) = sirohydrochlorin + Fe(2+). The protein operates within cofactor biosynthesis; adenosylcobalamin biosynthesis; precorrin-2 from uroporphyrinogen III: step 1/1. Its pathway is cofactor biosynthesis; adenosylcobalamin biosynthesis; sirohydrochlorin from precorrin-2: step 1/1. It functions in the pathway porphyrin-containing compound metabolism; siroheme biosynthesis; precorrin-2 from uroporphyrinogen III: step 1/1. It participates in porphyrin-containing compound metabolism; siroheme biosynthesis; siroheme from sirohydrochlorin: step 1/1. The protein operates within porphyrin-containing compound metabolism; siroheme biosynthesis; sirohydrochlorin from precorrin-2: step 1/1. Functionally, multifunctional enzyme that catalyzes the SAM-dependent methylations of uroporphyrinogen III at position C-2 and C-7 to form precorrin-2 via precorrin-1. Then it catalyzes the NAD-dependent ring dehydrogenation of precorrin-2 to yield sirohydrochlorin. Finally, it catalyzes the ferrochelation of sirohydrochlorin to yield siroheme. The protein is Siroheme synthase of Escherichia coli O7:K1 (strain IAI39 / ExPEC).